The sequence spans 524 residues: Cytochrome P450 4F3 (524 aa).

A helical membrane pass occupies residues 15–35; sequence AASPWLLLLLVGASCLLAYIL. Cysteine 468 contributes to the heme binding site.

This sequence belongs to the cytochrome P450 family. It depends on heme as a cofactor.

It localises to the endoplasmic reticulum membrane. The protein resides in the microsome membrane. The catalysed reaction is leukotriene B4 + reduced [NADPH--hemoprotein reductase] + O2 = 18-hydroxy-leukotriene B4 + oxidized [NADPH--hemoprotein reductase] + H2O + H(+). It catalyses the reaction leukotriene B4 + reduced [NADPH--hemoprotein reductase] + O2 = 19-hydroxy-leukotriene B4 + oxidized [NADPH--hemoprotein reductase] + H2O + H(+). It participates in lipid metabolism; leukotriene B4 degradation. In terms of biological role, a cytochrome P450 monooxygenase involved in the metabolism of the pro-inflammatory lipid mediator leukotriene B4 (LTB4). Hydroxylates at the omega-1 and omega-2 positions LTB4. This oxidation step leads to LTB4 inactivation, which is postulated to be a crucial part of the resolution of inflammation. Mechanistically, uses molecular oxygen inserting one oxygen atom into a substrate, and reducing the second into a water molecule, with two electrons provided by NADPH via cytochrome P450 reductase (CPR; NADPH-ferrihemoprotein reductase). The protein is Cytochrome P450 4F3 of Rattus norvegicus (Rat).